The following is a 73-amino-acid chain: Small ribosomal subunit protein bS18B (73 aa).

Belongs to the bacterial ribosomal protein bS18 family. In terms of assembly, part of the 30S ribosomal subunit. Forms a tight heterodimer with protein bS6.

In terms of biological role, binds as a heterodimer with protein bS6 to the central domain of the 16S rRNA, where it helps stabilize the platform of the 30S subunit. In Frankia alni (strain DSM 45986 / CECT 9034 / ACN14a), this protein is Small ribosomal subunit protein bS18B.